A 314-amino-acid polypeptide reads, in one-letter code: ATP synthase gamma chain (314 aa).

Belongs to the ATPase gamma chain family. As to quaternary structure, F-type ATPases have 2 components, CF(1) - the catalytic core - and CF(0) - the membrane proton channel. CF(1) has five subunits: alpha(3), beta(3), gamma(1), delta(1), epsilon(1). CF(0) has three main subunits: a, b and c.

Its subcellular location is the cellular thylakoid membrane. In terms of biological role, produces ATP from ADP in the presence of a proton gradient across the membrane. The gamma chain is believed to be important in regulating ATPase activity and the flow of protons through the CF(0) complex. The sequence is that of ATP synthase gamma chain from Synechocystis sp. (strain ATCC 27184 / PCC 6803 / Kazusa).